We begin with the raw amino-acid sequence, 29 residues long: YCQKWLWTCDSERKCCEDMVCRLWCKKRL.

3 disulfide bridges follow: C2–C16, C9–C21, and C15–C25. L29 carries the leucine amide modification.

It belongs to the neurotoxin 30 (phrixotoxin) family. Expressed by the venom gland.

The protein resides in the secreted. Inhibits the voltage-gated sodium channels Nav1.1/SCN1A (IC(50)=360 nM), Nav1.2/SCN2A (IC(50)=600 nM), Nav1.3/SCN3A (IC(50)=1280), Nav1.4/SCN4A (IC(50)=330 nM), Nav1.6/SCN8A (IC(50)=1200 nM), Nav1.7/SCN9A (IC(50)=1-40 nM), and voltage-gated potassium channels Kv11.1/KCNH2 (IC(50)=4.8 uM). Induces analgesia in mammals. This analgesia is mediated by a non-opioid receptor related mechanism. The sequence is that of Beta-theraphotoxin-Gr1b from Grammostola rosea (Chilean rose tarantula).